The following is a 94-amino-acid chain: C-C motif chemokine 26 (94 aa).

A signal peptide spans Met1 to Ala23. 2 disulfides stabilise this stretch: Cys33/Cys57 and Cys34/Cys73.

It belongs to the intercrine beta (chemokine CC) family. In terms of assembly, monomer. Ubiquitously expressed at low levels in various tissues including heart and ovary.

It localises to the secreted. Functionally, chemoattractant for eosinophils and basophils. Acts as a ligand for C-C chemokine receptor CCR3 which triggers Ca(2+) mobilization in eosinophils. Also acts as a ligand for CX3C chemokine receptor CX3CR1, inducing cell chemotaxis. The chain is C-C motif chemokine 26 from Homo sapiens (Human).